Consider the following 425-residue polypeptide: Glutamyl-tRNA reductase (425 aa).

Substrate-binding positions include 49–52 (TCNR), Ser107, 112–114 (EPQ), and Gln118. Cys50 serves as the catalytic Nucleophile. 187–192 (GAGETI) lines the NADP(+) pocket.

This sequence belongs to the glutamyl-tRNA reductase family. As to quaternary structure, homodimer.

It catalyses the reaction (S)-4-amino-5-oxopentanoate + tRNA(Glu) + NADP(+) = L-glutamyl-tRNA(Glu) + NADPH + H(+). It functions in the pathway porphyrin-containing compound metabolism; protoporphyrin-IX biosynthesis; 5-aminolevulinate from L-glutamyl-tRNA(Glu): step 1/2. Its function is as follows. Catalyzes the NADPH-dependent reduction of glutamyl-tRNA(Glu) to glutamate 1-semialdehyde (GSA). The sequence is that of Glutamyl-tRNA reductase from Pseudomonas putida (strain GB-1).